The primary structure comprises 372 residues: Glutamate 5-kinase (372 aa).

Position 14 (K14) interacts with ATP. Substrate contacts are provided by S54, D141, and N153. ATP is bound at residue 173–174 (TD). The PUA domain occupies 280–358 (RGTLVLDAGA…EAIESILGYS (79 aa)).

Belongs to the glutamate 5-kinase family.

Its subcellular location is the cytoplasm. The catalysed reaction is L-glutamate + ATP = L-glutamyl 5-phosphate + ADP. It participates in amino-acid biosynthesis; L-proline biosynthesis; L-glutamate 5-semialdehyde from L-glutamate: step 1/2. Catalyzes the transfer of a phosphate group to glutamate to form L-glutamate 5-phosphate. The sequence is that of Glutamate 5-kinase from Pseudomonas putida (strain ATCC 700007 / DSM 6899 / JCM 31910 / BCRC 17059 / LMG 24140 / F1).